A 437-amino-acid polypeptide reads, in one-letter code: Selenocysteine lyase (437 aa).

M1 bears the N-acetylmethionine mark. The tract at residues M1–N30 is disordered. A compositionally biased stretch (basic and acidic residues) spans R7 to Y26. K252 is modified (N6-(pyridoxal phosphate)lysine). C380 serves as the catalytic S-selanylcysteine intermediate.

This sequence belongs to the class-V pyridoxal-phosphate-dependent aminotransferase family. Homodimer. Pyridoxal 5'-phosphate is required as a cofactor.

It is found in the cytoplasm. The protein localises to the cytosol. The catalysed reaction is L-selenocysteine + AH2 = hydrogenselenide + L-alanine + A + H(+). In terms of biological role, catalyzes the decomposition of L-selenocysteine to L-alanine and elemental selenium. This is Selenocysteine lyase (SCLY) from Bos taurus (Bovine).